Here is a 67-residue protein sequence, read N- to C-terminus: Protein C' (67 aa).

It belongs to the rhabdoviruses C protein family.

Seems to stimulates transcription by the viral polymerase. May play a role in viral pathogenesis or transmission by insects vectors. The chain is Protein C' (P) from Vesicular stomatitis Indiana virus (strain 98COE North America) (VSIV).